Consider the following 249-residue polypeptide: Probable transcriptional regulatory protein MXAN_4974 (249 aa).

The protein belongs to the TACO1 family.

It is found in the cytoplasm. The protein is Probable transcriptional regulatory protein MXAN_4974 of Myxococcus xanthus (strain DK1622).